Consider the following 100-residue polypeptide: MAKKSMIARDVKRKKMAERYAAKRAALMAAFNAADDPMDRLEIHRKIQALPRNSAPSRIRNRCWATGKPRGYYRDFGLCRNQLRERAHKGELPGVVKSSW.

Belongs to the universal ribosomal protein uS14 family. As to quaternary structure, part of the 30S ribosomal subunit. Contacts proteins S3 and S10.

Functionally, binds 16S rRNA, required for the assembly of 30S particles and may also be responsible for determining the conformation of the 16S rRNA at the A site. The protein is Small ribosomal subunit protein uS14 of Parasynechococcus marenigrum (strain WH8102).